A 378-amino-acid polypeptide reads, in one-letter code: Cytochrome b (378 aa).

The next 4 helical transmembrane spans lie at 33-53, 77-98, 113-133, and 178-198; these read SGSL…FLSM, WLIR…YFHI, XNVG…GYVL, and FFAF…IHLI. Heme b-binding residues include His-83 and His-97. Heme b is bound at residue His-196. His-201 lines the a ubiquinone pocket. The next 4 helical transmembrane spans lie at 226–246, 288–308, 320–340, and 347–367; these read FKDL…ALFS, LGGV…PILH, LTQF…WIGG, and FIII…VLFP.

This sequence belongs to the cytochrome b family. In terms of assembly, the cytochrome bc1 complex contains 3 respiratory subunits (MT-CYB, CYC1 and UQCRFS1), 2 core proteins (UQCRC1 and UQCRC2) and probably 6 low-molecular weight proteins. The cofactor is heme b.

The protein localises to the mitochondrion inner membrane. Functionally, component of the ubiquinol-cytochrome c reductase complex (complex III or cytochrome b-c1 complex) that is part of the mitochondrial respiratory chain. The b-c1 complex mediates electron transfer from ubiquinol to cytochrome c. Contributes to the generation of a proton gradient across the mitochondrial membrane that is then used for ATP synthesis. The chain is Cytochrome b (mt-cyb) from Nannacara anomala (Goldeneye cichlid).